A 103-amino-acid polypeptide reads, in one-letter code: UPF0145 protein RSKD131_1772 (103 aa).

This sequence belongs to the UPF0145 family.

The protein is UPF0145 protein RSKD131_1772 of Cereibacter sphaeroides (strain KD131 / KCTC 12085) (Rhodobacter sphaeroides).